Reading from the N-terminus, the 348-residue chain is Phenylalanine--tRNA ligase alpha subunit (348 aa).

E259 is a binding site for Mg(2+).

Belongs to the class-II aminoacyl-tRNA synthetase family. Phe-tRNA synthetase alpha subunit type 1 subfamily. Tetramer of two alpha and two beta subunits. Mg(2+) is required as a cofactor.

It localises to the cytoplasm. It catalyses the reaction tRNA(Phe) + L-phenylalanine + ATP = L-phenylalanyl-tRNA(Phe) + AMP + diphosphate + H(+). The sequence is that of Phenylalanine--tRNA ligase alpha subunit from Limosilactobacillus reuteri (strain DSM 20016) (Lactobacillus reuteri).